The chain runs to 367 residues: Female-specific protein transformer (367 aa).

The tract at residues 86–280 is disordered; the sequence is ESISSKKIKS…HRHHRSQERS (195 aa). The span at 109-129 shows a compositional bias: polar residues; it reads VKQNSPDVTQKFTKKYGSSEN. Residues 130 to 144 show a composition bias toward basic and acidic residues; the sequence is PDFRRHSSYEKDNYH. Residues 195-223 are compositionally biased toward basic residues; the sequence is NRRRSSHRSRRGSGSPRSRRYTSRHRRRS. Positions 229–238 are enriched in basic and acidic residues; that stretch reads TSWKHNPEHR. The segment covering 239 to 257 has biased composition (basic residues); the sequence is TSRRSRTRSPRGNRSRRRS.

Its function is as follows. Sex differentiation protein controlling female somatic sexual differentiation. May act by promoting the formation of a splicing enhancer complex. The polypeptide is Female-specific protein transformer (Musca domestica (House fly)).